The chain runs to 286 residues: Dolichyl-diphosphooligosaccharide--protein glycosyltransferase subunit SWP1 (286 aa).

A signal peptide spans 1–19 (MQFFKTLAALVSCISFVLA). Residues 20–194 (YVAQDVHVSF…HAEPKRVAKP (175 aa)) lie on the Lumenal side of the membrane. A helical transmembrane segment spans residues 195–215 (IAVIFVLIIFITILSLIVTWL). At 216–228 (NSCAAAFNNIPTG) the chain is on the cytoplasmic side. The helical transmembrane segment at 229–249 (VTAVYFLGFIATIVGFEVIFA) threads the bilayer. Residues 250–252 (RYY) are Lumenal-facing. The chain crosses the membrane as a helical span at residues 253–273 (LGTSIFETLFSSLYLGAPGLL). Residues 274–286 (TSTKFLRSFGQTI) lie on the Cytoplasmic side of the membrane.

It belongs to the SWP1 family. Component of the oligosaccharyltransferase (OST) complex, which appears to exist in two assemblies comprising OST1, OST2, OST4, OST5, STT3, SWP1, WPB1, and either OST3 or OST6. OST assembly occurs through the formation of 3 subcomplexes. Subcomplex 1 contains OST1 and OST5, subcomplex 2 contains STT3, OST3, and OST4, and subcomplex 3 contains OST2, WBP1, and SWP1. Interacts with SEC61 and SSS1.

It localises to the endoplasmic reticulum membrane. It functions in the pathway protein modification; protein glycosylation. In terms of biological role, subunit of the oligosaccharyl transferase (OST) complex that catalyzes the initial transfer of a defined glycan (Glc(3)Man(9)GlcNAc(2) in eukaryotes) from the lipid carrier dolichol-pyrophosphate to an asparagine residue within an Asn-X-Ser/Thr consensus motif in nascent polypeptide chains, the first step in protein N-glycosylation. N-glycosylation occurs cotranslationally and the complex associates with the Sec61 complex at the channel-forming translocon complex that mediates protein translocation across the endoplasmic reticulum (ER). All subunits are required for a maximal enzyme activity. The sequence is that of Dolichyl-diphosphooligosaccharide--protein glycosyltransferase subunit SWP1 (SWP1) from Saccharomyces cerevisiae (strain ATCC 204508 / S288c) (Baker's yeast).